Reading from the N-terminus, the 78-residue chain is Defensin-like protein (78 aa).

Positions 1–31 are cleaved as a signal peptide; that stretch reads MGRSIRLFATFFLIAMLFLSTEMGPMTSAEA. Cystine bridges form between Cys-34–Cys-78, Cys-45–Cys-65, Cys-51–Cys-72, and Cys-55–Cys-74.

Belongs to the DEFL family. In terms of tissue distribution, predominantly expressed in the pistil during all stages of flower development.

The protein localises to the secreted. Its function is as follows. May be involved in the defense of the pistil against pathogen infection. The chain is Defensin-like protein from Petunia integrifolia (Violet-flowered petunia).